The primary structure comprises 511 residues: Maturase K (511 aa).

It belongs to the intron maturase 2 family. MatK subfamily.

It is found in the plastid. Its subcellular location is the chloroplast. Functionally, usually encoded in the trnK tRNA gene intron. Probably assists in splicing its own and other chloroplast group II introns. This Melica altissima (Siberian melic grass) protein is Maturase K.